Here is a 304-residue protein sequence, read N- to C-terminus: tRNA pseudouridine synthase B (304 aa).

Aspartate 48 (nucleophile) is an active-site residue.

It belongs to the pseudouridine synthase TruB family. Type 1 subfamily.

It catalyses the reaction uridine(55) in tRNA = pseudouridine(55) in tRNA. In terms of biological role, responsible for synthesis of pseudouridine from uracil-55 in the psi GC loop of transfer RNAs. The protein is tRNA pseudouridine synthase B of Pseudomonas aeruginosa (strain UCBPP-PA14).